The following is a 585-amino-acid chain: Protein FAM13C (585 aa).

Disordered regions lie at residues 26 to 45 (PVSL…ENNK), 83 to 138 (SMGN…NAFK), and 171 to 216 (EAAQ…APED). 2 stretches are compositionally biased toward basic and acidic residues: residues 27–45 (VSLH…ENNK) and 99–112 (ESGR…ETEH). Position 131 is a phosphoserine (serine 131). Serine 238 bears the Phosphoserine mark. Disordered stretches follow at residues 250 to 282 (FNLD…DGKE), 349 to 391 (EEQG…EETP), and 441 to 477 (IPTI…DHLT). The segment covering 262–275 (STQQFMMPRSSSRC) has biased composition (polar residues). Phosphoserine occurs at positions 385 and 386.

The protein belongs to the FAM13 family.

The chain is Protein FAM13C (FAM13C) from Homo sapiens (Human).